A 334-amino-acid chain; its full sequence is L-lactate dehydrogenase A chain (334 aa).

NAD(+) is bound by residues 30-58 and Arg-100; that span reads GQVG…LEDK. Substrate is bound by residues Arg-107, Asn-139, and Arg-170. Asn-139 contacts NAD(+). His-194 (proton acceptor) is an active-site residue. Thr-249 lines the substrate pocket.

This sequence belongs to the LDH/MDH superfamily. LDH family. In terms of assembly, homotetramer.

The protein localises to the cytoplasm. It catalyses the reaction (S)-lactate + NAD(+) = pyruvate + NADH + H(+). Its pathway is fermentation; pyruvate fermentation to lactate; (S)-lactate from pyruvate: step 1/1. Functionally, interconverts simultaneously and stereospecifically pyruvate and lactate with concomitant interconversion of NADH and NAD(+). This chain is L-lactate dehydrogenase A chain (ldha), found in Xenopus laevis (African clawed frog).